We begin with the raw amino-acid sequence, 807 residues long: Glycerol-3-phosphate acyltransferase (807 aa).

Residues C308–M313 carry the HXXXXD motif motif.

This sequence belongs to the GPAT/DAPAT family.

The protein resides in the cell inner membrane. It carries out the reaction sn-glycerol 3-phosphate + an acyl-CoA = a 1-acyl-sn-glycero-3-phosphate + CoA. It participates in phospholipid metabolism; CDP-diacylglycerol biosynthesis; CDP-diacylglycerol from sn-glycerol 3-phosphate: step 1/3. In Shewanella denitrificans (strain OS217 / ATCC BAA-1090 / DSM 15013), this protein is Glycerol-3-phosphate acyltransferase.